A 534-amino-acid polypeptide reads, in one-letter code: Kelch repeat and BTB domain-containing protein 4 (534 aa).

In terms of domain architecture, BTB spans 61-128 (ADVTISVEGR…IYHGTVKLRA (68 aa)). Residues 163–255 (CLQVMWLADR…SLKEIGENVH (93 aa)) enclose the BACK domain. 5 Kelch repeats span residues 255–301 (HIYL…KHGG), 302–344 (DLYV…SVPG), 347–394 (AIYS…NLNG), 396–446 (IYLL…VHKD), and 448–497 (VFIV…VFRD).

Component of the BCR(KBTBD4) E3 ubiquitin ligase complex, at least composed of CUL3, KBTBD4 and RBX1.

Functionally, substrate-specific adapter of a BCR (BTB-CUL3-RBX1) E3 ubiquitin ligase complex which targets CoREST corepressor complex components RCOR1, KDM1A/LSD1 and HDAC2 for proteasomal degradation. RCOR1 is likely to be the primary target while degradation of KDM1A and HDAC2 is likely due to their association with RCOR1. Also targets RCOR3, MIER2 and MIER3 for proteasomal degradation as well as associated proteins ZNF217 and RREB1. Degradation is dependent on the presence of an ELM2 domain in the target proteins. The polypeptide is Kelch repeat and BTB domain-containing protein 4 (Kbtbd4) (Mus musculus (Mouse)).